A 421-amino-acid polypeptide reads, in one-letter code: MAAAFGRCCRVLRSISRFHWRSQHTKADRQREPGLGFSFEFTEQQKEFQATARKFAREEIIPVAAEYDKTGEYPVPLIRRAWELGLMNPHIPQNCGGLGLGTFDACLISEELAYGCTGVQTAIEGNSLGQMPIIIAGNEQQKKKYLGRMTEEPLMCAYCVTEPGAGSDVAGIKTKAEKKGDEYIINGQKMWITNGGKASWYFLLARSDPDPKAPANKAFTGFIVEADTPGIQIGRKELNMGQRCSDTRGIVFEDVKVLKENVLIGDGAGFKIAMGAFDKTRPTVSSGAVGLAQRALDEATKYALERKTFGKLLIEHQAISFMLAEMAMKVELARMSYQRAAWEVDSGRRNTYYASIAKAFAGDIANQLATDAVQIFGGNGFNTEYPVEKLMRDAKIYQIYEGTSQIQRLIIAREHIGKYKS.

The transit peptide at 1 to 25 (MAAAFGRCCRVLRSISRFHWRSQHT) directs the protein to the mitochondrion. Residue Lys-69 is modified to N6-acetyllysine; alternate. N6-succinyllysine; alternate is present on Lys-69. 158–167 (YCVTEPGAGS) contacts FAD. Ser-167 contributes to the octanoyl-CoA binding site. Residue Lys-179 is modified to N6-succinyllysine. 191–193 (WIT) serves as a coordination point for FAD. Lys-212, Lys-217, Lys-259, and Lys-271 each carry N6-acetyllysine; alternate. 4 positions are modified to N6-succinyllysine; alternate: Lys-212, Lys-217, Lys-259, and Lys-271. Position 278 (Asp-278) interacts with octanoyl-CoA. Residue Lys-279 is modified to N6-acetyllysine. Arg-281 contributes to the octanoyl-CoA binding site. Lys-301 is modified (N6-acetyllysine). FAD contacts are provided by residues 306 to 308 (RKT) and 316 to 317 (HQ). Octanoyl-CoA contacts are provided by Arg-349 and Thr-351. Phosphothreonine is present on Thr-351. FAD is bound at residue 374-378 (QIFGG). Position 401 (Glu-401) interacts with octanoyl-CoA. Glu-401 acts as the Proton acceptor in catalysis. 402-405 (GTSQ) serves as a coordination point for FAD.

The protein belongs to the acyl-CoA dehydrogenase family. In terms of assembly, homotetramer. Interacts with the heterodimeric electron transfer flavoprotein ETF. The cofactor is FAD. Post-translationally, acetylated. Could occur at proximity of the cofactor-binding sites and reduce the catalytic activity. Could be deacetylated by SIRT3.

The protein resides in the mitochondrion matrix. It carries out the reaction a medium-chain 2,3-saturated fatty acyl-CoA + oxidized [electron-transfer flavoprotein] + H(+) = a medium-chain (2E)-enoyl-CoA + reduced [electron-transfer flavoprotein]. The enzyme catalyses pentanoyl-CoA + oxidized [electron-transfer flavoprotein] + H(+) = (2E)-pentenoyl-CoA + reduced [electron-transfer flavoprotein]. The catalysed reaction is hexanoyl-CoA + oxidized [electron-transfer flavoprotein] + H(+) = (2E)-hexenoyl-CoA + reduced [electron-transfer flavoprotein]. It catalyses the reaction octanoyl-CoA + oxidized [electron-transfer flavoprotein] + H(+) = (2E)-octenoyl-CoA + reduced [electron-transfer flavoprotein]. It carries out the reaction decanoyl-CoA + oxidized [electron-transfer flavoprotein] + H(+) = (2E)-decenoyl-CoA + reduced [electron-transfer flavoprotein]. The enzyme catalyses dodecanoyl-CoA + oxidized [electron-transfer flavoprotein] + H(+) = (2E)-dodecenoyl-CoA + reduced [electron-transfer flavoprotein]. The catalysed reaction is tetradecanoyl-CoA + oxidized [electron-transfer flavoprotein] + H(+) = (2E)-tetradecenoyl-CoA + reduced [electron-transfer flavoprotein]. It catalyses the reaction oxidized [electron-transfer flavoprotein] + hexadecanoyl-CoA + H(+) = (2E)-hexadecenoyl-CoA + reduced [electron-transfer flavoprotein]. It participates in lipid metabolism; mitochondrial fatty acid beta-oxidation. Its function is as follows. Medium-chain specific acyl-CoA dehydrogenase is one of the acyl-CoA dehydrogenases that catalyze the first step of mitochondrial fatty acid beta-oxidation, an aerobic process breaking down fatty acids into acetyl-CoA and allowing the production of energy from fats. The first step of fatty acid beta-oxidation consists in the removal of one hydrogen from C-2 and C-3 of the straight-chain fatty acyl-CoA thioester, resulting in the formation of trans-2-enoyl-CoA. Electron transfer flavoprotein (ETF) is the electron acceptor that transfers electrons to the main mitochondrial respiratory chain via ETF-ubiquinone oxidoreductase (ETF dehydrogenase). Among the different mitochondrial acyl-CoA dehydrogenases, medium-chain specific acyl-CoA dehydrogenase acts specifically on acyl-CoAs with saturated 6 to 12 carbons long primary chains. This chain is Medium-chain specific acyl-CoA dehydrogenase, mitochondrial, found in Macaca fascicularis (Crab-eating macaque).